A 970-amino-acid polypeptide reads, in one-letter code: Sodium/calcium exchanger 1 (970 aa).

The signal sequence occupies residues 1–32 (MLRLSLSPTYSLGFHLLAMMTLLISHVDHITA). At 33 to 71 (ETEMVEEGNETGECTGSYYCKKGVILPIWEPQDPSFGDK) the chain is on the extracellular side. The N-linked (GlcNAc...) asparagine glycan is linked to asparagine 41. The chain crosses the membrane as a helical span at residues 72–92 (IARATVYFVAMVYMFLGVSII). Residues 93 to 133 (ADRFMSSIEVITSQEKEITIKKPNGETTKTTVRIWNETVSN) lie on the Cytoplasmic side of the membrane. A helical transmembrane segment spans residues 134-154 (LTLMALGSSAPEILLSVIEVC). One copy of the Alpha-1 repeat lies at 138-178 (ALGSSAPEILLSVIEVCGHNFTAGDLGPSTIVGSAAFNMFI). The Extracellular segment spans residues 155–167 (GHNFTAGDLGPST). Asparagine 157 carries N-linked (GlcNAc...) asparagine glycosylation. Residues 168-188 (IVGSAAFNMFIIIALCVYVVP) traverse the membrane as a helical segment. Topologically, residues 189-201 (DGETRKIKHLRVF) are cytoplasmic. A helical membrane pass occupies residues 202-222 (FVTAAWSIFAYTWLYIILSVI). Residues 223–228 (SPGVVE) lie on the Extracellular side of the membrane. A helical membrane pass occupies residues 229-249 (VWEGLLTFFFFPICVVFAWVA). Residues 250–797 (DRRLLFYKYV…FVPPTEYWNG (548 aa)) are Cytoplasmic-facing. The putative calmodulin-binding region stretch occupies residues 251–270 (RRLLFYKYVYKRYRAGKQRG). Serine 282 and serine 389 each carry phosphoserine. Calx-beta domains are found at residues 393-493 (VNTE…VHLS) and 524-624 (ATVT…LEIG). Residues glutamate 417, aspartate 453, aspartate 478, aspartate 479, isoleucine 481, glutamate 483, glutamate 486, aspartate 530, aspartate 531, aspartate 532, glutamate 548, aspartate 584, aspartate 610, glutamate 611, glutamate 612, and glutamate 715 each coordinate Ca(2+). The chain crosses the membrane as a helical span at residues 798-818 (WACFIVSILMIGLLTAFIGDL). The Extracellular portion of the chain corresponds to 819–821 (ASH). A helical membrane pass occupies residues 822–842 (FGCTIGLKDSVTAVVFVALGT). An Alpha-2 repeat occupies 839 to 875 (ALGTSVPDTFASKVAATQDQYADASIGNVTGSNAVNV). The Cytoplasmic portion of the chain corresponds to 843–871 (SVPDTFASKVAATQDQYADASIGNVTGSN). Residues 872 to 892 (AVNVFLGIGVAWSIAAIYHAA) traverse the membrane as a helical segment. At 893 to 903 (NGEQFKVSPGT) the chain is on the extracellular side. A helical membrane pass occupies residues 904-924 (LAFSVTLFTIFAFINVGVLLY). Topologically, residues 925–941 (RRRPEIGGELGGPRTAK) are cytoplasmic. The helical transmembrane segment at 942-962 (LLTSCLFVLLWLLYIFFSSLE) threads the bilayer. The Extracellular segment spans residues 963–970 (AYCHIKGF).

The protein belongs to the Ca(2+):cation antiporter (CaCA) (TC 2.A.19) family. SLC8 subfamily.

It is found in the cell membrane. It carries out the reaction Ca(2+)(in) + 3 Na(+)(out) = Ca(2+)(out) + 3 Na(+)(in). With respect to regulation, activated by micromolar levels of Ca(2+). Functionally, mediates the exchange of one Ca(2+) ion against three to four Na(+) ions across the cell membrane, and thereby contributes to the regulation of cytoplasmic Ca(2+) levels and Ca(2+)-dependent cellular processes. Contributes to Ca(2+) transport during excitation-contraction coupling in muscle. In a first phase, voltage-gated channels mediate the rapid increase of cytoplasmic Ca(2+) levels due to release of Ca(2+) stores from the endoplasmic reticulum. SLC8A1 mediates the export of Ca(2+) from the cell during the next phase, so that cytoplasmic Ca(2+) levels rapidly return to baseline. Required for normal embryonic heart development and the onset of heart contractions. This is Sodium/calcium exchanger 1 (SLC8A1) from Cavia porcellus (Guinea pig).